Here is a 204-residue protein sequence, read N- to C-terminus: Arginine exporter protein ArgO (204 aa).

6 helical membrane-spanning segments follow: residues 1 to 21 (MWAVYLQGVLLGAAMILPLGP), 37 to 57 (LMVALLCAVSDMVLISAGIFG), 67 to 87 (LLLGAVTCGGVAFLLWFGWGA), 111 to 131 (IIATMLAVTWLNPHVYLDTFV), 154 to 174 (TASFTWFFALALLAAWLAPWL), and 179 to 199 (VQRVINFFVGMVMWGIALQLA).

The protein belongs to the LysE/ArgO transporter (TC 2.A.75) family.

Its subcellular location is the cell inner membrane. It carries out the reaction L-arginine(in) = L-arginine(out). In terms of biological role, involved in the export of arginine. Important to control the intracellular level of arginine and the correct balance between arginine and lysine. This chain is Arginine exporter protein ArgO, found in Pectobacterium atrosepticum (strain SCRI 1043 / ATCC BAA-672) (Erwinia carotovora subsp. atroseptica).